Consider the following 675-residue polypeptide: Vitamin K-dependent protein S (675 aa).

The N-terminal stretch at 1–24 (MRVLSARFRVLLACLALVIPVSET) is a signal peptide. The propeptide occupies 25-41 (NFLSKERASQVLVRKRR). Positions 42–87 (ANTLFEETMKGNLERECIEELCNKEEAREVFENNPETDYFYPKYLG) constitute a Gla domain. A 4-carboxyglutamate mark is found at E47, E48, E55, E57, E60, E61, E66, E67, E70, E73, and E77. The cysteines at positions 58 and 63 are disulfide-linked. The tract at residues 88-116 (CLGAFRVGSFHAARQSANAYPDLRSCVKA) is thrombin-sensitive. In terms of domain architecture, EGF-like 1 spans 117-155 (ISDQCDPIPCNEDGYLACQDGQAAFTCFCKPGWQGDRCQ). 13 cysteine pairs are disulfide-bonded: C121–C134, C126–C143, C145–C154, C161–C175, C171–C184, C186–C199, C205–C217, C212–C226, C228–C241, C247–C256, C252–C265, C267–C282, and C449–C475. Residue D136 is modified to (3R)-3-hydroxyaspartate. The EGF-like 2; calcium-binding domain maps to 157-200 (DVNECKDPSNVNGGCSQICDNTPGSYHCSCKRGFAMLPNKKDCK). Residues 201-242 (DLDECALKPSVCGTAVCKNIPGDFECECPDGYRYDPSSKSCK) form the EGF-like 3; calcium-binding domain. Positions 243–283 (DVDECSENMCAQLCVNFPGGYSCYCDGKKGFKLAQDQKSCE) constitute an EGF-like 4; calcium-binding domain. Laminin G-like domains lie at 299 to 475 (LLYL…NKHC) and 484 to 665 (YYPG…AHSC). N499 and N509 each carry an N-linked (GlcNAc...) asparagine glycan. Cysteines 638 and 665 form a disulfide.

In terms of processing, the iron and 2-oxoglutarate dependent 3-hydroxylation of aspartate and asparagine is (R) stereospecific within EGF domains. Plasma.

It is found in the secreted. Functionally, anticoagulant plasma protein; it is a cofactor to activated protein C in the degradation of coagulation factors Va and VIIIa. It helps to prevent coagulation and stimulating fibrinolysis. The polypeptide is Vitamin K-dependent protein S (Pros1) (Mus musculus (Mouse)).